The sequence spans 641 residues: WW domain-binding protein 11 (641 aa).

A compositionally biased stretch (polar residues) spans 1–11 (MGRRSTSSTKS). Residues 1–37 (MGRRSTSSTKSGKFMNPTDQARKEARKRELKKNKKQR) are disordered. The required for nuclear import stretch occupies residues 1–45 (MGRRSTSSTKSGKFMNPTDQARKEARKRELKKNKKQRMMVRAAVL). The residue at position 13 (lysine 13) is an N6-acetyllysine. The span at 28–37 (RELKKNKKQR) shows a compositional bias: basic residues. Positions 75–133 (EKVLKDKRKKLRETFERILRLYEKENPDIYKELRKLEVEYEQKRAQLSQYFDAVKNAQH) form a coiled coil. Serine 181 bears the Phosphoserine mark. The tract at residues 188-213 (HGVPRLPPGRKPPGPPPGPPPPQVLQ) is disordered. Arginine 192 is subject to Omega-N-methylarginine. Pro residues predominate over residues 192–210 (RLPPGRKPPGPPPGPPPPQ). Positions 217–221 (RKVGF) are interaction with PP1. The residue at position 236 (tyrosine 236) is a Phosphotyrosine. The tract at residues 236-550 (YSPELAQRGH…IQRPKADDAS (315 aa)) is disordered. At serine 237 the chain carries Phosphoserine. Positions 253 to 263 (SEDDGYPEDMD) are enriched in acidic residues. The span at 276 to 304 (TDRSDAESDGDEFGHREDSERDNTEEKKS) shows a compositional bias: basic and acidic residues. Serine 279 and serine 283 each carry phosphoserine. An interaction with PP1 region spans residues 306-310 (LSVRF). Residues 351 to 365 (EFSEEEDADDSDDSE) are compositionally biased toward acidic residues. A phosphoserine mark is found at serine 353, serine 361, and serine 364. The segment covering 366-380 (AEKQSQKQHKDDGHS) has biased composition (basic and acidic residues). Residues 381–404 (DSTAAASSQQQAPPQSAPASQIQA) show a composition bias toward low complexity. Pro residues-rich tracts occupy residues 405–447 (PPMP…PPGM), 456–504 (RLLP…PPRP), and 510–530 (PLVPPLGPAPPGLFPPAPLPN). The short motif at 455–466 (PRLLPPGPPPGR) is the PGR element. Lysine 557 is covalently cross-linked (Glycyl lysine isopeptide (Lys-Gly) (interchain with G-Cter in SUMO2)). An N6-acetyllysine modification is found at lysine 565. Lysine 572 participates in a covalent cross-link: Glycyl lysine isopeptide (Lys-Gly) (interchain with G-Cter in SUMO2). The interval 588 to 620 (ENKGATAVPQRRSEDDSAVPVAKAAPRSGPSVA) is disordered. Serine 600 bears the Phosphoserine mark. Residues 633 to 641 (FMKEMEGLL) are required for nuclear export.

Interacts via the PGR motif with PQBP1 in the nucleus. Interacts with the WW domains of WBP4. Interacts with PPP1CA, PPP1CB and PPP1CC. Ubiquitously expressed, with highest levels in testis.

It is found in the nucleus. It localises to the cytoplasm. Activates pre-mRNA splicing. May inhibit PP1 phosphatase activity. In Mus musculus (Mouse), this protein is WW domain-binding protein 11 (Wbp11).